A 310-amino-acid chain; its full sequence is Cysteine synthase (310 aa).

Residue Lys46 is modified to N6-(pyridoxal phosphate)lysine. Pyridoxal 5'-phosphate-binding positions include Asn76, 180–184, and Ser268; that span reads GTGGT.

This sequence belongs to the cysteine synthase/cystathionine beta-synthase family. Homodimer. The cofactor is pyridoxal 5'-phosphate.

It carries out the reaction O-acetyl-L-serine + hydrogen sulfide = L-cysteine + acetate. It participates in amino-acid biosynthesis; L-cysteine biosynthesis; L-cysteine from L-serine: step 2/2. This Staphylococcus aureus (strain Mu50 / ATCC 700699) protein is Cysteine synthase (cysK).